Reading from the N-terminus, the 135-residue chain is Protein PsiE homolog (135 aa).

4 consecutive transmembrane segments (helical) span residues 20–40 (VGLI…TIHL), 54–74 (YMLI…ALIV), 82–102 (HFPL…LIIV), and 107–127 (PIDT…LYLA).

It belongs to the PsiE family.

Its subcellular location is the cell inner membrane. The sequence is that of Protein PsiE homolog from Yersinia pseudotuberculosis serotype IB (strain PB1/+).